The chain runs to 228 residues: MNFIYQKKSPKTKEIEQLAKTQNIKIIRINTNELDKILKNKDHRGFALKLKLEKNKNVKTQTKDFENLLETFKKKENAFILLLDEIEDPQNFGAILRTAEQFSIDLVITTQKRSAKDNSTVLRTSSGASQYVKKMTVTNINNTINLLKNYGFWIYTGDIKGQDINKIKINDKKIALILGNEGKGVHKLIKENSDFLIRIPTSGKIDSLNVSVSTGILIFEIKRQLNLL.

Positions 179, 199, and 208 each coordinate S-adenosyl-L-methionine.

This sequence belongs to the class IV-like SAM-binding methyltransferase superfamily. RNA methyltransferase TrmH family.

This is an uncharacterized protein from Borreliella burgdorferi (strain ATCC 35210 / DSM 4680 / CIP 102532 / B31) (Borrelia burgdorferi).